Consider the following 31-residue polypeptide: Electron transfer flavoprotein-ubiquinone oxidoreductase (31 aa).

FAD is bound at residue 11–25 (VVIVGAGGAGLSAAI).

In terms of assembly, monomer. It depends on [4Fe-4S] cluster as a cofactor. The cofactor is FAD.

It carries out the reaction a ubiquinone + reduced [electron-transfer flavoprotein] = a ubiquinol + oxidized [electron-transfer flavoprotein] + H(+). Functionally, accepts electrons from ETF and reduces ubiquinone. This chain is Electron transfer flavoprotein-ubiquinone oxidoreductase, found in Paracoccus denitrificans.